We begin with the raw amino-acid sequence, 216 residues long: Vascular endothelial growth factor A (216 aa).

Residues Met1–Ala26 form the signal peptide. Intrachain disulfides connect Cys52/Cys94, Cys83/Cys128, and Cys87/Cys130. A glycan (N-linked (GlcNAc...) asparagine) is linked at Asn101. The interval Gln140–Tyr161 is disordered. The segment covering Lys145 to Tyr161 has biased composition (basic residues).

This sequence belongs to the PDGF/VEGF growth factor family. Homodimer; disulfide-linked. Also found as heterodimer with PGF. Interacts to the FLT1/VEGFR1 and KDR/VEGFR2 receptors, heparan sulfate and heparin. In terms of tissue distribution, expressed in venom gland, heart, brain, liver, skeletal muscle and kidney.

It localises to the secreted. Functionally, growth factor active in angiogenesis, vasculogenesis and endothelial cell growth. Induces endothelial cell proliferation, promotes cell migration, inhibits apoptosis and induces permeabilization of blood vessels. The polypeptide is Vascular endothelial growth factor A (Protobothrops flavoviridis (Habu)).